Reading from the N-terminus, the 164-residue chain is Cytochrome c oxidase subunit 4, mitochondrial (164 aa).

A mitochondrion-targeting transit peptide spans 1 to 33; it reads MFMNSMLRVSRQRAAVRSTVSLYRGFVSASIRR. Zn(2+)-binding residues include Cys120, His128, Cys143, and Cys146.

It belongs to the cytochrome c oxidase subunit 5B family. Component of the cytochrome c oxidase (complex IV, CIV), a multisubunit enzyme composed of a catalytic core of 3 subunits and several supernumerary subunits. The complex exists as a monomer or a dimer and forms supercomplexes (SCs) in the inner mitochondrial membrane with ubiquinol-cytochrome c oxidoreductase (cytochrome b-c1 complex, complex III, CIII).

It is found in the mitochondrion inner membrane. It participates in energy metabolism; oxidative phosphorylation. Component of the cytochrome c oxidase, the last enzyme in the mitochondrial electron transport chain which drives oxidative phosphorylation. The respiratory chain contains 3 multisubunit complexes succinate dehydrogenase (complex II, CII), ubiquinol-cytochrome c oxidoreductase (cytochrome b-c1 complex, complex III, CIII) and cytochrome c oxidase (complex IV, CIV), that cooperate to transfer electrons derived from NADH and succinate to molecular oxygen, creating an electrochemical gradient over the inner membrane that drives transmembrane transport and the ATP synthase. Cytochrome c oxidase is the component of the respiratory chain that catalyzes the reduction of oxygen to water. Electrons originating from reduced cytochrome c in the intermembrane space (IMS) are transferred via the dinuclear copper A center (CU(A)) of subunit 2 and heme A of subunit 1 to the active site in subunit 1, a binuclear center (BNC) formed by heme A3 and copper B (CU(B)). The BNC reduces molecular oxygen to 2 water molecules using 4 electrons from cytochrome c in the IMS and 4 protons from the mitochondrial matrix. In Schizosaccharomyces pombe (strain 972 / ATCC 24843) (Fission yeast), this protein is Cytochrome c oxidase subunit 4, mitochondrial (cox4).